The following is a 95-amino-acid chain: Defensin-like protein 247 (95 aa).

An N-terminal signal peptide occupies residues 1–24 (MKFAAIFLVTCVFFSLFSSNLSQG). Intrachain disulfides connect Cys37/Cys94, Cys48/Cys77, Cys56/Cys87, and Cys75/Cys89.

The protein belongs to the DEFL family.

Its subcellular location is the secreted. This chain is Defensin-like protein 247 (SCRL6), found in Arabidopsis thaliana (Mouse-ear cress).